The primary structure comprises 504 residues: Probable periplasmic serine endoprotease DegP-like (504 aa).

Residues 1 to 26 form the signal peptide; sequence MLKTTTVAGLAAVLLTTGLPAEVAQS. Basic and acidic residues predominate over residues 102–118; it reads RADRWRDRRGPRGEGRL. A disordered region spans residues 102 to 122; that stretch reads RADRWRDRRGPRGEGRLRPRA. Positions 113-286 are serine protease; the sequence is RGEGRLRPRA…PASVAKDVVD (174 aa). Residues His-140, Asp-170, and Ser-244 each act as charge relay system in the active site. Substrate-binding positions include 242–244 and 299–303; these read GNS and LGVQI. 2 consecutive PDZ domains span residues 287–378 and 401–491; these read SLIK…LWRS and ATGE…IEAQ. Disordered regions lie at residues 389 to 411 and 428 to 447; these read GTLPSDAKEPAPATGEAQPDEGQ and EDGKGVTIASVDPDSDAGDR.

It belongs to the peptidase S1C family.

The protein resides in the periplasm. The enzyme catalyses Acts on substrates that are at least partially unfolded. The cleavage site P1 residue is normally between a pair of hydrophobic residues, such as Val-|-Val.. Functionally, might be efficient in the degradation of transiently denatured and unfolded proteins which accumulate in the periplasm following stress conditions. This Rhizobium meliloti (strain 1021) (Ensifer meliloti) protein is Probable periplasmic serine endoprotease DegP-like (degP1).